The primary structure comprises 107 residues: Precursor of CEP14 (107 aa).

The first 21 residues, 1–21, serve as a signal peptide directing secretion; it reads MAVRLIPTIWLFIVFAVIVSA. Residues 22-92 constitute a propeptide that is removed on maturation; the sequence is LPSLVSSRKL…GKLRSRHLST (71 aa). Asn-39 carries an N-linked (GlcNAc...) asparagine glycan. The interval 43-76 is disordered; it reads REEEKSHMPHVTKTSTLSALPKGKIPNSTPSKKG. Residues Pro-101 and Pro-103 each carry the hydroxyproline modification.

The protein belongs to the C-terminally encoded plant signaling peptide (CEP) family. In terms of assembly, interacts with CEP receptors (e.g. CEPR1 and CEPR2). In terms of processing, the mature small signaling peptide is generated by proteolytic processing of the longer precursor.

It localises to the secreted. The protein localises to the extracellular space. Its subcellular location is the apoplast. In terms of biological role, extracellular signaling peptide that may regulate primary root growth rate and systemic nitrogen (N)-demand signaling. This chain is Precursor of CEP14, found in Arabidopsis thaliana (Mouse-ear cress).